The primary structure comprises 503 residues: Trehalose-6-phosphate synthase (503 aa).

A D-glucose 6-phosphate-binding site is contributed by Arg-22. Residue Gly-42 to Gly-43 participates in UDP-alpha-D-glucose binding. Tyr-94 and Asp-148 together coordinate D-glucose 6-phosphate. UDP-alpha-D-glucose is bound by residues Arg-290 and Lys-295. D-glucose 6-phosphate is bound at residue Arg-328. UDP-alpha-D-glucose is bound at residue Leu-393–Glu-397. The interval Gly-481–Phe-503 is disordered.

Belongs to the glycosyltransferase 20 family. As to quaternary structure, homotetramer.

It carries out the reaction ADP-alpha-D-glucose + D-glucose 6-phosphate = alpha,alpha-trehalose 6-phosphate + ADP + H(+). It catalyses the reaction CDP-alpha-D-glucose + D-glucose 6-phosphate = alpha,alpha-trehalose 6-phosphate + CDP + H(+). The catalysed reaction is GDP-alpha-D-glucose + D-glucose 6-phosphate = alpha,alpha-trehalose 6-phosphate + GDP + H(+). The enzyme catalyses TDP-alpha-D-glucose + D-glucose 6-phosphate = 5-methyl-UDP + alpha,alpha-trehalose 6-phosphate + H(+). It carries out the reaction D-glucose 6-phosphate + UDP-alpha-D-glucose = alpha,alpha-trehalose 6-phosphate + UDP + H(+). It participates in glycan biosynthesis; trehalose biosynthesis. With respect to regulation, stimulated by the polynucleotide FII (physiological activator), and by chondroitin sulfate (CS) and heparin. Activation by the polyanion is inhibited by high salt concentration as well as by high concentrations of mononucleoside phosphates. Its function is as follows. Involved in the production of glycogen and alpha-glucan via the TreS-Pep2 branch involved in the biosynthesis of maltose-1-phosphate (M1P), and probably in the osmoprotection via the biosynthesis of trehalose. Catalyzes the transfer of glucose from UDP-glucose (UDP-Glc) to glucose-6-phosphate (Glc-6-P) to form trehalose-6-phosphate. ADP-Glc, CDP-Glc, GDP-Glc and TDP-Glc are also glucosyl donors, however, when the pyrimidine sugar nucleotides (CDP-Glc, TDP-Glc and UDP-Glc) are used as substrates, there is an absolute requirement for a high molecular weight polyanion for activity. The chain is Trehalose-6-phosphate synthase from Mycolicibacterium smegmatis (strain ATCC 700084 / mc(2)155) (Mycobacterium smegmatis).